We begin with the raw amino-acid sequence, 122 residues long: Large ribosomal subunit protein uL14c (122 aa).

Belongs to the universal ribosomal protein uL14 family. As to quaternary structure, part of the 50S ribosomal subunit.

It is found in the plastid. The protein localises to the chloroplast. Functionally, binds to 23S rRNA. The sequence is that of Large ribosomal subunit protein uL14c from Chlamydomonas reinhardtii (Chlamydomonas smithii).